The chain runs to 239 residues: NADH-quinone oxidoreductase chain 2 (239 aa).

Cysteine 96, cysteine 101, cysteine 137, and cysteine 141 together coordinate [2Fe-2S] cluster.

Belongs to the complex I 24 kDa subunit family. NDH-1 is composed of at least 14 different subunits, Nqo1 to Nqo14. The complex has a L-shaped structure, with the hydrophobic arm (subunits Nqo7, Nqo8, Nqo10 to Nqo14) embedded in the inner membrane and the hydrophilic peripheral arm (subunits Nqo1 to Nqo6, Nqo9) protruding into the bacterial cytoplasm. The hydrophilic domain contains all the redox centers. Requires [2Fe-2S] cluster as cofactor.

It is found in the cell inner membrane. The enzyme catalyses a quinone + NADH + 5 H(+)(in) = a quinol + NAD(+) + 4 H(+)(out). Its function is as follows. NDH-1 shuttles electrons from NADH, via FMN and iron-sulfur (Fe-S) centers, to quinones in the respiratory chain. The immediate electron acceptor for the enzyme in this species is believed to be ubiquinone. Couples the redox reaction to proton translocation (for every two electrons transferred, four hydrogen ions are translocated across the cytoplasmic membrane), and thus conserves the redox energy in a proton gradient. The sequence is that of NADH-quinone oxidoreductase chain 2 (nqo2) from Paracoccus denitrificans.